A 276-amino-acid polypeptide reads, in one-letter code: Mitochondrial outer membrane protein porin 2 (276 aa).

Position 76 is a phosphoserine (Ser76). Thr236 carries the phosphothreonine modification.

It belongs to the eukaryotic mitochondrial porin (TC 1.B.8.1) family. As to expression, expressed in root tips, steles, leaves, sepals, petals, stamen and pistils.

The protein resides in the mitochondrion outer membrane. Forms a channel through the mitochondrial outer membrane that allows diffusion of small hydrophilic molecules. The channel adopts an open conformation at low or zero membrane potential and a closed conformation at potentials above 30-40 mV. The open state has a weak anion selectivity whereas the closed state is cation-selective. Involved in plant growth and development at the vegetative and reproductive stages. Is important for leaf and pollen development and mitochondrial membrane potential steady state. May be involved in ABA-mediated early seedling development and disease resistance. This Arabidopsis thaliana (Mouse-ear cress) protein is Mitochondrial outer membrane protein porin 2 (VDAC2).